Here is a 247-residue protein sequence, read N- to C-terminus: MIYEKVAEELISSSYTIAFTGAGISTASGIPDFRGPQGLWKKYSPELASIEYFEKDPKNFWGFYSLRMRGLFEAQPNKAHYSLAELEKMGIIKVIITQNIDGLHQKAGSKNVIELHGTMRRSYCVLCLRTYDSLNVLSMIEKGNLPPRCDCGGIIRPDVVLFGEPVKNIYEALSIAYESDLVISIGSSLTVYPANLIPQTVKERGGKLIILNMEETPLDSIADYVVREPVEISLPKILENVRQKILS.

The Deacetylase sirtuin-type domain occupies 1–244 (MIYEKVAEEL…PKILENVRQK (244 aa)). The NAD(+) site is built by alanine 22, threonine 26, phenylalanine 33, arginine 34, glutamine 98, isoleucine 100, aspartate 101, and histidine 116. Phenylalanine 33 is a nicotinamide binding site. Nicotinamide contacts are provided by isoleucine 100 and aspartate 101. Histidine 116 serves as the catalytic Proton acceptor. Residues cysteine 124, cysteine 127, cysteine 149, and cysteine 151 each coordinate Zn(2+). NAD(+) is bound by residues serine 187, serine 188, asparagine 212, and valine 230.

This sequence belongs to the sirtuin family. Class U subfamily. Monomer. Zn(2+) is required as a cofactor.

Its subcellular location is the cytoplasm. The enzyme catalyses N(6)-acetyl-L-lysyl-[protein] + NAD(+) + H2O = 2''-O-acetyl-ADP-D-ribose + nicotinamide + L-lysyl-[protein]. Functionally, NAD-dependent protein deacetylase which modulates the activities of several enzymes which are inactive in their acetylated form. Deacetylates the N-terminal lysine residue of albA1, the major archaeal DNA compaction protein and that, in turn, increases albA1's DNA binding affinity, thereby repressing transcription. The sequence is that of NAD-dependent protein deacetylase from Saccharolobus solfataricus (strain ATCC 35092 / DSM 1617 / JCM 11322 / P2) (Sulfolobus solfataricus).